The sequence spans 124 residues: Small ribosomal subunit protein uS13 (124 aa).

The segment at 94–124 is disordered; sequence GLPLRGQRTKNNSRTRKGKRKTVANKKKATK. Over residues 100 to 124 the composition is skewed to basic residues; that stretch reads QRTKNNSRTRKGKRKTVANKKKATK.

This sequence belongs to the universal ribosomal protein uS13 family. In terms of assembly, part of the 30S ribosomal subunit. Forms a loose heterodimer with protein S19. Forms two bridges to the 50S subunit in the 70S ribosome.

Located at the top of the head of the 30S subunit, it contacts several helices of the 16S rRNA. In the 70S ribosome it contacts the 23S rRNA (bridge B1a) and protein L5 of the 50S subunit (bridge B1b), connecting the 2 subunits; these bridges are implicated in subunit movement. Contacts the tRNAs in the A and P-sites. This is Small ribosomal subunit protein uS13 from Flavobacterium psychrophilum (strain ATCC 49511 / DSM 21280 / CIP 103535 / JIP02/86).